The sequence spans 252 residues: Small ribosomal subunit protein uS2A (252 aa).

Residue Ser2 is modified to N-acetylserine. The segment at 209–252 (EVEQQVAEEATTEEAGEEEAKEEVTEEQAEATEWAEENADNVEW) is disordered. Residues 218–252 (ATTEEAGEEEAKEEVTEEQAEATEWAEENADNVEW) are compositionally biased toward acidic residues.

The protein belongs to the universal ribosomal protein uS2 family. In terms of assembly, component of the small ribosomal subunit. Mature ribosomes consist of a small (40S) and a large (60S) subunit. The 40S subunit contains about 33 different proteins and 1 molecule of RNA (18S). The 60S subunit contains about 49 different proteins and 3 molecules of RNA (25S, 5.8S and 5S). Interacts with RPS21.

The protein localises to the cytoplasm. In terms of biological role, required for the assembly and/or stability of the 40S ribosomal subunit. Required for the processing of the 20S rRNA-precursor to mature 18S rRNA in a late step of the maturation of 40S ribosomal subunits. The protein is Small ribosomal subunit protein uS2A of Saccharomyces cerevisiae (strain RM11-1a) (Baker's yeast).